The chain runs to 186 residues: Tegument protein UL55 (186 aa).

This sequence belongs to the alphaherpesvirinae HHV-1 UL55 family.

The protein resides in the virion tegument. It localises to the host nucleus matrix. This is Tegument protein UL55 from Human herpesvirus 2 (strain HG52) (HHV-2).